A 344-amino-acid chain; its full sequence is SAGA complex subunit Sgf73 (344 aa).

Over residues 123–143 the composition is skewed to polar residues; the sequence is NKDVNNGNNAPIKNGVKSTAK. The tract at residues 123–196 is disordered; it reads NKDVNNGNNA…KKKNPKVKGP (74 aa). In terms of domain architecture, SCA7 spans 190 to 256; the sequence is NPKVKGPVDV…KNQVKIQRQI (67 aa).

It belongs to the ataxin-7 family. In terms of assembly, component of the 1.8 MDa SAGA (Spt-Ada-Gcn5 acetyltransferase) complex, which is composed of 19 subunits tra1, spt7, taf5, ngg1/ada3, sgf73, spt20, spt8, taf12, taf6, hfi1/ada1, ubp8, gcn5, ada2, spt3, sgf29, taf10, taf9, sgf11 and sus1. The SAGA complex is composed of 4 modules, namely the HAT (histone acetyltransferase) module (gcn5, ada2, ngg1/ada3 and sgf29), the DUB (deubiquitinating) module (ubp8, sgf11, sgf73 and sus1), the core or TAF (TBP-associated factor) module (taf5, taf6, taf9, taf10 and taf12), and the Tra1 or SPT (Suppressor of Ty) module (tra1, hfi1/ada1, spt3, spt7, spt8 and spt20). The Tra1/SPT module binds activators, the core module recruits TBP (TATA-binding protein), the HAT module contains the histone H3 acetyltransferase gcn5, and the DUB module comprises the histone H2B deubiquitinase ubp8. Interacts with the RITS subunits ago1 and chp1.

The protein localises to the nucleus. Component of the transcription coactivator SAGA complex. SAGA acts as a general cofactor required for essentially all RNA polymerase II transcription. At the promoters, SAGA is required for transcription pre-initiation complex (PIC) recruitment. It influences RNA polymerase II transcriptional activity through different activities such as TBP interaction (via core/TAF module) and promoter selectivity, interaction with transcription activators (via Tra1/SPT module), and chromatin modification through histone acetylation (via HAT module) and deubiquitination (via DUB module). SAGA preferentially acetylates histones H3 (to form H3K9ac, H3K14ac, H3K18ac and H3K23ac) and H2B and deubiquitinates histone H2B. SAGA interacts with DNA via upstream activating sequences (UASs). Sgf73 tethers the DUB module to the rest of the SAGA complex through its central domain and activates the ubiquitin hydrolase ubp8 by maintaining its catalytic domain in an active conformation. Sgf73 mediates recruitment of the TREX-2 mRNA export factors sac3 and thp1 to SAGA, which is crucial to target TREX-2 to the nuclear pore complex (NPC) necessary for export of mRNA. Upon environmental stress, involved in the bypass of the canonical mRNA export process for the immediate export of stress-related transcripts to maintain proteostasis. Independent on its function in SAGA, promotes the assembly of the RNA-induced transcriptional silencing complex (RITS) and is required for pericentromeric heterochromatin silencing and the generation of siRNA. The protein is SAGA complex subunit Sgf73 (sgf73) of Schizosaccharomyces pombe (strain 972 / ATCC 24843) (Fission yeast).